A 37-amino-acid polypeptide reads, in one-letter code: U1-ectatotoxin-Eb1a subunit B (37 aa).

This sequence belongs to the ectatomin family. Ectatomin-Eq subfamily. In terms of assembly, heterodimer of subunits A and B; disulfide-linked. Expressed by the venom gland.

It localises to the secreted. The protein localises to the target cell membrane. In Ectatomma brunneum (Ant), this protein is U1-ectatotoxin-Eb1a subunit B.